The following is a 425-amino-acid chain: Phosphoribosylamine--glycine ligase (425 aa).

Residues 107 to 312 (KDLCARYNIP…LLVLLNAAVD (206 aa)) form the ATP-grasp domain. 133–193 (VDQTGAPIVI…EEFMTGEEAS (61 aa)) serves as a coordination point for ATP. The disordered stretch occupies residues 214 to 233 (RVGDGDVGPNTGGMGAYSPA). The Mg(2+) site is built by glutamate 282 and asparagine 284.

The protein belongs to the GARS family. Requires Mg(2+) as cofactor. It depends on Mn(2+) as a cofactor.

It catalyses the reaction 5-phospho-beta-D-ribosylamine + glycine + ATP = N(1)-(5-phospho-beta-D-ribosyl)glycinamide + ADP + phosphate + H(+). It functions in the pathway purine metabolism; IMP biosynthesis via de novo pathway; N(1)-(5-phospho-D-ribosyl)glycinamide from 5-phospho-alpha-D-ribose 1-diphosphate: step 2/2. The polypeptide is Phosphoribosylamine--glycine ligase (Mesorhizobium japonicum (strain LMG 29417 / CECT 9101 / MAFF 303099) (Mesorhizobium loti (strain MAFF 303099))).